The primary structure comprises 233 residues: Orotidine 5'-phosphate decarboxylase (233 aa).

Residues aspartate 13, lysine 35, 62–71 (DLKFHDIPNT), threonine 122, arginine 182, glutamine 191, glycine 211, and arginine 212 contribute to the substrate site. Catalysis depends on lysine 64, which acts as the Proton donor.

Belongs to the OMP decarboxylase family. Type 1 subfamily. Homodimer.

The enzyme catalyses orotidine 5'-phosphate + H(+) = UMP + CO2. It participates in pyrimidine metabolism; UMP biosynthesis via de novo pathway; UMP from orotate: step 2/2. Its function is as follows. Catalyzes the decarboxylation of orotidine 5'-monophosphate (OMP) to uridine 5'-monophosphate (UMP). The polypeptide is Orotidine 5'-phosphate decarboxylase (Pseudomonas putida (strain ATCC 700007 / DSM 6899 / JCM 31910 / BCRC 17059 / LMG 24140 / F1)).